Reading from the N-terminus, the 236-residue chain is 1-(5-phosphoribosyl)-5-[(5-phosphoribosylamino)methylideneamino] imidazole-4-carboxamide isomerase (236 aa).

D8 (proton acceptor) is an active-site residue. D127 serves as the catalytic Proton donor.

The protein belongs to the HisA/HisF family.

The protein resides in the cytoplasm. It carries out the reaction 1-(5-phospho-beta-D-ribosyl)-5-[(5-phospho-beta-D-ribosylamino)methylideneamino]imidazole-4-carboxamide = 5-[(5-phospho-1-deoxy-D-ribulos-1-ylimino)methylamino]-1-(5-phospho-beta-D-ribosyl)imidazole-4-carboxamide. The protein operates within amino-acid biosynthesis; L-histidine biosynthesis; L-histidine from 5-phospho-alpha-D-ribose 1-diphosphate: step 4/9. The protein is 1-(5-phosphoribosyl)-5-[(5-phosphoribosylamino)methylideneamino] imidazole-4-carboxamide isomerase of Sulfurimonas denitrificans (strain ATCC 33889 / DSM 1251) (Thiomicrospira denitrificans (strain ATCC 33889 / DSM 1251)).